Here is a 397-residue protein sequence, read N- to C-terminus: Phosphoglycerate kinase (397 aa).

Residues 21–23 (DFN), Arg37, 60–63 (HLGR), Arg119, and Arg152 contribute to the substrate site. Residues Lys202, Gly294, Glu325, and 351-354 (GGDS) contribute to the ATP site.

The protein belongs to the phosphoglycerate kinase family. Monomer.

It localises to the cytoplasm. The enzyme catalyses (2R)-3-phosphoglycerate + ATP = (2R)-3-phospho-glyceroyl phosphate + ADP. Its pathway is carbohydrate degradation; glycolysis; pyruvate from D-glyceraldehyde 3-phosphate: step 2/5. The protein is Phosphoglycerate kinase of Pseudothermotoga lettingae (strain ATCC BAA-301 / DSM 14385 / NBRC 107922 / TMO) (Thermotoga lettingae).